Reading from the N-terminus, the 449-residue chain is Probable aminotransferase TAT1 (449 aa).

Polar residues predominate over residues 1–12 (MNHNSNLVLPSH). The disordered stretch occupies residues 1 to 20 (MNHNSNLVLPSHQTETQTQD).

Belongs to the class-I pyridoxal-phosphate-dependent aminotransferase family. Pyridoxal 5'-phosphate serves as cofactor.

The chain is Probable aminotransferase TAT1 from Arabidopsis thaliana (Mouse-ear cress).